The sequence spans 183 residues: MQCWQQPFLRFLQQPFFLATASLAGSSSSFNVLIPKRDEDGDGEGPGDVTAGVSRAAGSPSGWEAPWVQQPRCCRRATPVCCAGQGPPRSLQQGGSEVLLGQLCSPEPDWLPSSGPKVAKQVFQVAAELLQHPEHFVPSSVPEGCVHKPGSTCDGSLKGRAYPSCVPKRDPEHSREESHPLSG.

Positions 1–29 are cleaved as a signal peptide; sequence MQCWQQPFLRFLQQPFFLATASLAGSSSS. A disordered region spans residues 149–183; it reads PGSTCDGSLKGRAYPSCVPKRDPEHSREESHPLSG. Basic and acidic residues predominate over residues 167–183; the sequence is PKRDPEHSREESHPLSG.

It localises to the secreted. This is an uncharacterized protein from Homo sapiens (Human).